We begin with the raw amino-acid sequence, 327 residues long: Glutaminase 1 (327 aa).

Substrate is bound by residues Ser-74, Asn-126, Glu-170, Asn-177, Tyr-201, Tyr-253, and Val-271.

This sequence belongs to the glutaminase family. As to quaternary structure, homotetramer.

It carries out the reaction L-glutamine + H2O = L-glutamate + NH4(+). This Bacillus subtilis (strain 168) protein is Glutaminase 1 (glsA1).